The sequence spans 314 residues: 3'-5' exoribonuclease YhaM (314 aa).

Residues 163–279 (HVVSMLDLAK…LHYIDNLDAK (117 aa)) form the HD domain.

Belongs to the YhaM family.

Its function is as follows. Shows a 3'-5' exoribonuclease activity. The chain is 3'-5' exoribonuclease YhaM from Bacillus mycoides (strain KBAB4) (Bacillus weihenstephanensis).